Here is a 30-residue protein sequence, read N- to C-terminus: Dendrotoxin B (30 aa).

Cys-3 and Cys-22 form a disulfide bridge.

This sequence belongs to the three-finger toxin family. Short-chain subfamily. Orphan group XI sub-subfamily. Contains 4 disulfide bonds. In terms of tissue distribution, expressed by the venom gland.

The protein localises to the secreted. Its function is as follows. Blocks voltage-gated potassium channels (Kv). This is the slowly inactivating phase of potassium efflux which is blocked by this toxin. The protein is Dendrotoxin B of Dendroaspis angusticeps (Eastern green mamba).